A 189-amino-acid chain; its full sequence is dCTP deaminase, dUMP-forming (189 aa).

Residues 101–106, aspartate 119, 127–129, glutamine 148, tyrosine 162, and glutamine 174 contribute to the dCTP site; these read KSSLGR and TLE. Residue glutamate 129 is the Proton donor/acceptor of the active site.

The protein belongs to the dCTP deaminase family. Homotrimer.

It catalyses the reaction dCTP + 2 H2O = dUMP + NH4(+) + diphosphate. Its pathway is pyrimidine metabolism; dUMP biosynthesis; dUMP from dCTP: step 1/1. Bifunctional enzyme that catalyzes both the deamination of dCTP to dUTP and the hydrolysis of dUTP to dUMP without releasing the toxic dUTP intermediate. The protein is dCTP deaminase, dUMP-forming of Rhodococcus jostii (strain RHA1).